A 416-amino-acid polypeptide reads, in one-letter code: MFKFGDEKGQLKCSFCGKSQEQVRKLVAGPGVYICDECIELCNEIIEEELNDDVEFNLNNIPKPREIKKILDQYVVGQERAKKSLSVAVYNHYKRVNSDMKIDDVELQKSNILMVGPTGCGKTLLAQTLARILDVPFAITDATSLTEAGYVGEDVENILLKLIQAADYDIEKAERGIIYIDEIDKIARKSENPSITRDVSGEGVQQALLKILEGTVASVPPQGGRKHPHQEFIQIDTTNILFIAGGAFDGLDKIIKSRIDNKVMGFGADIKSKTEENVGETLKYILPEDLLRYGLIPEFIGRLPVIVTLNELVEEDLVKILTEPRNALVKQYKKFFEMDNVELEFTPEALTAIAQKALERNTGARGLRAVVEEAILDIMYDLPSEPGIAKCVITPEVIKNHKNPELIRVKDKEETA.

Residues 1–54 (MFKFGDEKGQLKCSFCGKSQEQVRKLVAGPGVYICDECIELCNEIIEEELNDDV) form the ClpX-type ZB domain. Cys13, Cys16, Cys35, and Cys38 together coordinate Zn(2+). 117-124 (PTGCGKTL) provides a ligand contact to ATP.

The protein belongs to the ClpX chaperone family. In terms of assembly, component of the ClpX-ClpP complex. Forms a hexameric ring that, in the presence of ATP, binds to fourteen ClpP subunits assembled into a disk-like structure with a central cavity, resembling the structure of eukaryotic proteasomes.

In terms of biological role, ATP-dependent specificity component of the Clp protease. It directs the protease to specific substrates. Can perform chaperone functions in the absence of ClpP. The sequence is that of ATP-dependent Clp protease ATP-binding subunit ClpX from Halothermothrix orenii (strain H 168 / OCM 544 / DSM 9562).